A 308-amino-acid chain; its full sequence is Probable manganese-dependent inorganic pyrophosphatase (308 aa).

Positions 9, 13, 15, 74, 96, and 148 each coordinate Mn(2+).

It belongs to the PPase class C family. Requires Mn(2+) as cofactor.

It is found in the cytoplasm. It catalyses the reaction diphosphate + H2O = 2 phosphate + H(+). The polypeptide is Probable manganese-dependent inorganic pyrophosphatase (Oceanobacillus iheyensis (strain DSM 14371 / CIP 107618 / JCM 11309 / KCTC 3954 / HTE831)).